We begin with the raw amino-acid sequence, 408 residues long: BTB/POZ and MATH domain-containing protein 3 (408 aa).

Residues 24-158 enclose the MATH domain; sequence NGSHQFTIQG…DDCLVINCTV (135 aa). Residues 194-261 enclose the BTB domain; that stretch reads CDIAFQVGDE…IYTDVLPNVH (68 aa).

It belongs to the Tdpoz family. In terms of assembly, homodimer or heterodimer with BPM3 and BPM5. Interacts with CUL3A and CUL3B. Interacts with RAP2-4 and RAP2-13. Binds to MYB56 at the promoter of FLOWERING LOCUS T (FT). In terms of tissue distribution, ubiquitous.

Its subcellular location is the nucleus. It is found in the cytoplasm. The protein operates within protein modification; protein ubiquitination. May act as a substrate-specific adapter of an E3 ubiquitin-protein ligase complex (CUL3-RBX1-BTB) which mediates the ubiquitination and subsequent proteasomal degradation of target proteins. The protein is BTB/POZ and MATH domain-containing protein 3 of Arabidopsis thaliana (Mouse-ear cress).